Here is a 566-residue protein sequence, read N- to C-terminus: Mannitol 2-dehydrogenase (566 aa).

NAD(+) is bound at residue 106 to 117; the sequence is IVHVGVGGFHRA.

Belongs to the mannitol dehydrogenase family. Monomer.

The catalysed reaction is D-mannitol + NAD(+) = D-fructose + NADH + H(+). In terms of biological role, catalyzes the NAD(H)-dependent interconversion of D-fructose and D-mannitol in the mannitol metabolic pathway. This chain is Mannitol 2-dehydrogenase, found in Pyrenophora tritici-repentis (strain Pt-1C-BFP) (Wheat tan spot fungus).